The sequence spans 452 residues: Probable hexaprenyl pyrophosphate synthase, mitochondrial (452 aa).

K108, R111, and H204 together coordinate isopentenyl diphosphate. Positions 211 and 215 each coordinate Mg(2+). R220 is a binding site for an all-trans-polyprenyl diphosphate. R221 provides a ligand contact to isopentenyl diphosphate. The an all-trans-polyprenyl diphosphate site is built by K303, T304, Q341, and K358.

Belongs to the FPP/GGPP synthase family. It depends on Mg(2+) as a cofactor.

The protein resides in the mitochondrion. It functions in the pathway cofactor biosynthesis; ubiquinone biosynthesis. In terms of biological role, assembly of polyisoprenoid side chains. The polyprenyl synthase of coenzyme Q biosynthesis catalyzes the formation from isopentenyl diphosphate of all trans-polyprenyl pyrophosphates generally ranging in length of between 6 and 10 isoprene units depending on the species. The sequence is that of Probable hexaprenyl pyrophosphate synthase, mitochondrial (COQ1) from Yarrowia lipolytica (strain CLIB 122 / E 150) (Yeast).